A 163-amino-acid chain; its full sequence is MRCPFCAHPEDKVVDSRESKEGESIRRRRECLKCEKRFTTYERIDEIPYMVVKKDGRRERFDRQKVLNGLMRACEKRPVSIGKLEAIVNEAETFVIDSPERERRTSEIGQLIMEHLKKYDKVAYVRFASVYLDFKDVREFLSELQDLLNHKDPAAVATVKPIK.

The segment at 3-34 (CPFCAHPEDKVVDSRESKEGESIRRRRECLKC) is a zinc-finger region. Positions 49 to 139 (YMVVKKDGRR…VYLDFKDVRE (91 aa)) constitute an ATP-cone domain.

It belongs to the NrdR family. Zn(2+) serves as cofactor.

Its function is as follows. Negatively regulates transcription of bacterial ribonucleotide reductase nrd genes and operons by binding to NrdR-boxes. The protein is Transcriptional repressor NrdR of Koribacter versatilis (strain Ellin345).